Here is a 331-residue protein sequence, read N- to C-terminus: MEFYASLKSIAMHVPSERVKNAEFQQFLDTSDEWIEKRTGIKERRFANDEEKSSDLGVIAAKQAIERAHLTPKDIDLVVVATLSPDFLAMPSTACVLSAKLGIENKPAFDISAACTGFIYLLSVAKAYVESGMCENVLIVGAEKTSSVLDFKDRGTCILFGDGAGACVIGRTKRLKESVLDVQISANGNFSNYLYTPRTLKPTPFNAKEEASEPFLRMKGNEVFKLAVKTLLKDVEMILEKNALKPEDVRLFIPHQANFRIIQAVREHLDFKDEQVVLTVHKYGNTSAASIPMAMCEAYEEGRLKKGDLMLLDAFGGGLTWGSALVYFGGS.

Catalysis depends on residues Cys115 and His255. The ACP-binding stretch occupies residues 256–260 (QANFR). Residue Asn285 is part of the active site.

It belongs to the thiolase-like superfamily. FabH family. In terms of assembly, homodimer.

Its subcellular location is the cytoplasm. The catalysed reaction is malonyl-[ACP] + acetyl-CoA + H(+) = 3-oxobutanoyl-[ACP] + CO2 + CoA. The protein operates within lipid metabolism; fatty acid biosynthesis. Its function is as follows. Catalyzes the condensation reaction of fatty acid synthesis by the addition to an acyl acceptor of two carbons from malonyl-ACP. Catalyzes the first condensation reaction which initiates fatty acid synthesis and may therefore play a role in governing the total rate of fatty acid production. Possesses both acetoacetyl-ACP synthase and acetyl transacylase activities. Its substrate specificity determines the biosynthesis of branched-chain and/or straight-chain of fatty acids. The sequence is that of Beta-ketoacyl-[acyl-carrier-protein] synthase III from Helicobacter pylori (strain Shi470).